The sequence spans 419 residues: S-adenosylmethionine synthase (419 aa).

His-15 contributes to the ATP binding site. Position 17 (Asp-17) interacts with Mg(2+). Glu-43 lines the K(+) pocket. L-methionine is bound by residues Glu-56 and Gln-100. Positions 100–110 (QSPDIAQGVNE) are flexible loop. ATP-binding positions include 171–173 (DGK), 248–249 (KF), Asp-257, 263–264 (RK), Ala-280, and Lys-284. L-methionine is bound at residue Asp-257. Residue Lys-288 coordinates L-methionine.

Belongs to the AdoMet synthase family. In terms of assembly, homotetramer; dimer of dimers. The cofactor is Mg(2+). K(+) is required as a cofactor.

The protein resides in the cytoplasm. The enzyme catalyses L-methionine + ATP + H2O = S-adenosyl-L-methionine + phosphate + diphosphate. Its pathway is amino-acid biosynthesis; S-adenosyl-L-methionine biosynthesis; S-adenosyl-L-methionine from L-methionine: step 1/1. In terms of biological role, catalyzes the formation of S-adenosylmethionine (AdoMet) from methionine and ATP. The overall synthetic reaction is composed of two sequential steps, AdoMet formation and the subsequent tripolyphosphate hydrolysis which occurs prior to release of AdoMet from the enzyme. In Prochlorococcus marinus (strain MIT 9303), this protein is S-adenosylmethionine synthase.